A 498-amino-acid polypeptide reads, in one-letter code: RuvB-like helicase 2 (498 aa).

ATP is bound at residue 79–86 (GPPSTGKT). Residues 458–498 (VTIGQESTDGSTQPQAKQQEVAQPEATQPQSQPEDDKMETD) form a disordered region. Polar residues predominate over residues 461 to 489 (GQESTDGSTQPQAKQQEVAQPEATQPQSQ).

It belongs to the RuvB family. As to quaternary structure, may form heterododecamers with RVB1. Component of the SWR1 chromatin remodeling complex, the INO80 chromatin remodeling complex, and of the R2TP complex.

It localises to the nucleus. The enzyme catalyses ATP + H2O = ADP + phosphate + H(+). DNA helicase which participates in several chromatin remodeling complexes, including the SWR1 and the INO80 complexes. The SWR1 complex mediates the ATP-dependent exchange of histone H2A for the H2A variant HZT1 leading to transcriptional regulation of selected genes by chromatin remodeling. The INO80 complex remodels chromatin by shifting nucleosomes and is involved in DNA repair. Also involved in pre-rRNA processing. This Candida albicans (strain SC5314 / ATCC MYA-2876) (Yeast) protein is RuvB-like helicase 2 (RVB2).